The sequence spans 492 residues: Ketol-acid reductoisomerase (NADP(+)) (492 aa).

The 195-residue stretch at 14 to 208 folds into the KARI N-terminal Rossmann domain; that stretch reads LDQLGRCRFM…GGHKAGVLES (195 aa). NADP(+) contacts are provided by residues 45–48, Arg68, Arg76, Ser78, and 108–110; these read CGAQ and DKQ. Residue His132 is part of the active site. Gly158 contacts NADP(+). KARI C-terminal knotted domains lie at 209–344 and 345–485; these read SFVA…NAPK and YDGK…MTDM. Residues Asp217, Glu221, Glu389, and Glu393 each contribute to the Mg(2+) site. Residue Ser414 coordinates substrate.

Belongs to the ketol-acid reductoisomerase family. It depends on Mg(2+) as a cofactor.

The enzyme catalyses (2R)-2,3-dihydroxy-3-methylbutanoate + NADP(+) = (2S)-2-acetolactate + NADPH + H(+). It carries out the reaction (2R,3R)-2,3-dihydroxy-3-methylpentanoate + NADP(+) = (S)-2-ethyl-2-hydroxy-3-oxobutanoate + NADPH + H(+). It functions in the pathway amino-acid biosynthesis; L-isoleucine biosynthesis; L-isoleucine from 2-oxobutanoate: step 2/4. Its pathway is amino-acid biosynthesis; L-valine biosynthesis; L-valine from pyruvate: step 2/4. Functionally, involved in the biosynthesis of branched-chain amino acids (BCAA). Catalyzes an alkyl-migration followed by a ketol-acid reduction of (S)-2-acetolactate (S2AL) to yield (R)-2,3-dihydroxy-isovalerate. In the isomerase reaction, S2AL is rearranged via a Mg-dependent methyl migration to produce 3-hydroxy-3-methyl-2-ketobutyrate (HMKB). In the reductase reaction, this 2-ketoacid undergoes a metal-dependent reduction by NADPH to yield (R)-2,3-dihydroxy-isovalerate. This chain is Ketol-acid reductoisomerase (NADP(+)), found in Haemophilus influenzae (strain 86-028NP).